A 347-amino-acid polypeptide reads, in one-letter code: Phospho-N-acetylmuramoyl-pentapeptide-transferase (347 aa).

The next 10 membrane-spanning stretches (helical) occupy residues 10-30, 67-87, 91-111, 127-147, 164-184, 195-215, 220-240, 250-270, 275-295, and 325-345; these read SLVFFLLTVFALAFILGIFLG, AGGILFFIVLLLTIFFWLPLG, TWLFAFLIISWSSLGWYDDIV, FVLQLLISAVITTAVMYIYKG, LGHSVLGQVFYFILAVLAIVG, LDGLAAGTTCMCAFGLLVVAV, IPLATDIPVLLTALLGVSLAF, VFMGDTGSLLIGGVLGSCAVM, LLLILLGGVFVAEAGSVILQI, and VVKRFWTAGFFCMVFGIIAAL.

It belongs to the glycosyltransferase 4 family. MraY subfamily. It depends on Mg(2+) as a cofactor.

The protein localises to the cell inner membrane. The catalysed reaction is UDP-N-acetyl-alpha-D-muramoyl-L-alanyl-gamma-D-glutamyl-meso-2,6-diaminopimeloyl-D-alanyl-D-alanine + di-trans,octa-cis-undecaprenyl phosphate = di-trans,octa-cis-undecaprenyl diphospho-N-acetyl-alpha-D-muramoyl-L-alanyl-D-glutamyl-meso-2,6-diaminopimeloyl-D-alanyl-D-alanine + UMP. Its pathway is cell wall biogenesis; peptidoglycan biosynthesis. Functionally, catalyzes the initial step of the lipid cycle reactions in the biosynthesis of the cell wall peptidoglycan: transfers peptidoglycan precursor phospho-MurNAc-pentapeptide from UDP-MurNAc-pentapeptide onto the lipid carrier undecaprenyl phosphate, yielding undecaprenyl-pyrophosphoryl-MurNAc-pentapeptide, known as lipid I. This is Phospho-N-acetylmuramoyl-pentapeptide-transferase from Chlamydia abortus (strain DSM 27085 / S26/3) (Chlamydophila abortus).